The primary structure comprises 428 residues: Flap endonuclease 1-B (428 aa).

An N-domain region spans residues 1-132 (MGIKGLTKVL…KELAKRSLKR (132 aa)). Aspartate 34 contributes to the Mg(2+) binding site. Arginine 98 lines the DNA pocket. Residues aspartate 114, glutamate 186, glutamate 188, aspartate 207, and aspartate 209 each coordinate Mg(2+). The I-domain stretch occupies residues 150–281 (AVEKFSKRTV…QRALKLIRQH (132 aa)). DNA is bound at residue glutamate 186. DNA contacts are provided by glycine 259 and aspartate 261. Aspartate 261 is a binding site for Mg(2+).

Belongs to the XPG/RAD2 endonuclease family. FEN1 subfamily. Interacts with PCNA. Three molecules of FEN1 bind to one PCNA trimer with each molecule binding to one PCNA monomer. PCNA stimulates the nuclease activity without altering cleavage specificity. Requires Mg(2+) as cofactor. In terms of processing, phosphorylated. Phosphorylation upon DNA damage induces relocalization to the nuclear plasma.

It localises to the nucleus. Its subcellular location is the nucleolus. It is found in the nucleoplasm. The protein resides in the mitochondrion. Functionally, structure-specific nuclease with 5'-flap endonuclease and 5'-3' exonuclease activities involved in DNA replication and repair. During DNA replication, cleaves the 5'-overhanging flap structure that is generated by displacement synthesis when DNA polymerase encounters the 5'-end of a downstream Okazaki fragment. It enters the flap from the 5'-end and then tracks to cleave the flap base, leaving a nick for ligation. Also involved in the long patch base excision repair (LP-BER) pathway, by cleaving within the apurinic/apyrimidinic (AP) site-terminated flap. Acts as a genome stabilization factor that prevents flaps from equilibrating into structures that lead to duplications and deletions. Also possesses 5'-3' exonuclease activity on nicked or gapped double-stranded DNA, and exhibits RNase H activity. Also involved in replication and repair of rDNA and in repairing mitochondrial DNA. The protein is Flap endonuclease 1-B of Sorghum bicolor (Sorghum).